A 211-amino-acid chain; its full sequence is Urease accessory protein UreG (211 aa).

11-18 lines the GTP pocket; that stretch reads GPVGAGKT.

The protein belongs to the SIMIBI class G3E GTPase family. UreG subfamily. As to quaternary structure, homodimer. UreD, UreF and UreG form a complex that acts as a GTP-hydrolysis-dependent molecular chaperone, activating the urease apoprotein by helping to assemble the nickel containing metallocenter of UreC. The UreE protein probably delivers the nickel.

It localises to the cytoplasm. Functionally, facilitates the functional incorporation of the urease nickel metallocenter. This process requires GTP hydrolysis, probably effectuated by UreG. This is Urease accessory protein UreG from Actinobacillus pleuropneumoniae serotype 3 (strain JL03).